Consider the following 1000-residue polypeptide: Chromosome transmission fidelity protein 18 homolog (1000 aa).

3 disordered regions span residues 53 to 89 (SAGD…RDAS), 130 to 159 (AGNS…DSKF), and 272 to 301 (EFGE…SHSL). Residues 60–70 (SNANSKPTGDS) are compositionally biased toward polar residues. Acidic residues predominate over residues 272-295 (EFGENDSEILENDDNAGEEDDEDE). 396–403 (GPPGLGKT) is a binding site for ATP. Positions 888-898 (ARNAGRDNTTA) are enriched in polar residues. The segment at 888-916 (ARNAGRDNTTAAAAVKTADPKGAKSAAKP) is disordered.

The protein belongs to the activator 1 small subunits family. CTF18 subfamily. In terms of assembly, component of the CTF18-RFC complex, which consists of ctf18, ctf8, dcc1, rfc2, rfc3, rfc4 and rfc5. The CTF18-RFC complex associates with pcna.

It localises to the nucleus. Its function is as follows. Chromosome cohesion factor involved in sister chromatid cohesion and fidelity of chromosome transmission. Component of one of the cell nuclear antigen loader complexes, CTF18-replication factor C (CTF18-RFC), which consists of ctf18, ctf8, dcc1, rfc2, rfc3, rfc4 and rfc5. The CTF18-RFC complex binds to single-stranded and primed DNAs and has weak ATPase activity that is stimulated by the presence of primed DNA, replication protein A (RPA) and by proliferating cell nuclear antigen (pcna). The CTF18-RFC complex catalyzes the ATP-dependent loading of pcna onto primed and gapped DNA. This Xenopus laevis (African clawed frog) protein is Chromosome transmission fidelity protein 18 homolog (chtf18).